The chain runs to 378 residues: Outer membrane porin C (378 aa).

Positions methionine 1–alanine 21 are cleaved as a signal peptide.

It belongs to the Gram-negative porin family. Homotrimer.

The protein resides in the cell outer membrane. Forms pores that allow passive diffusion of small molecules across the outer membrane. The sequence is that of Outer membrane porin C (ompC) from Salmonella typhimurium (strain LT2 / SGSC1412 / ATCC 700720).